The sequence spans 246 residues: 1-(5-phosphoribosyl)-5-[(5-phosphoribosylamino)methylideneamino] imidazole-4-carboxamide isomerase (246 aa).

Catalysis depends on Asp-8, which acts as the Proton acceptor. The Proton donor role is filled by Asp-130.

Belongs to the HisA/HisF family.

It is found in the cytoplasm. It carries out the reaction 1-(5-phospho-beta-D-ribosyl)-5-[(5-phospho-beta-D-ribosylamino)methylideneamino]imidazole-4-carboxamide = 5-[(5-phospho-1-deoxy-D-ribulos-1-ylimino)methylamino]-1-(5-phospho-beta-D-ribosyl)imidazole-4-carboxamide. It participates in amino-acid biosynthesis; L-histidine biosynthesis; L-histidine from 5-phospho-alpha-D-ribose 1-diphosphate: step 4/9. The polypeptide is 1-(5-phosphoribosyl)-5-[(5-phosphoribosylamino)methylideneamino] imidazole-4-carboxamide isomerase (Halorhodospira halophila (strain DSM 244 / SL1) (Ectothiorhodospira halophila (strain DSM 244 / SL1))).